Reading from the N-terminus, the 369-residue chain is Muscleblind-like protein 1 (369 aa).

4 C3H1-type zinc fingers span residues 13–41 (WLTLEVCREFQRGTCSRPDTECKFAHPSK), 47–73 (NGRVIACFDSLKGRCSRENCKYLHPPP), 178–206 (TDRLEVCREYQRGNCNRGENDCRFAHPAD), and 214–240 (DNTVTVCMDYIKGRCSREKCKYFHPPA).

The protein belongs to the muscleblind family.

It is found in the nucleus. It localises to the cytoplasm. The protein resides in the cytoplasmic granule. Its function is as follows. Involved in pre-mRNA alternative splicing regulation. Binds to CUG triplet repeat in RNA. This is Muscleblind-like protein 1 (MBNL1) from Gallus gallus (Chicken).